Consider the following 510-residue polypeptide: NAD(P)H-quinone oxidoreductase subunit 2 B, chloroplastic (510 aa).

Transmembrane regions (helical) follow at residues 24–44 (LLLF…GLIL), 57–77 (IPWL…ALLF), 99–119 (IFQF…VEYI), 124–144 (MAIA…MFLC), 149–169 (LITI…LSGY), 183–203 (YLLM…WLYG), 227–247 (PGIS…LSPA), 295–315 (WHLL…LIAI), 323–343 (MLAY…IVGD), 354–374 (YMLF…LFGL), 395–415 (ALSL…AGFF), 418–438 (LHLF…IGLL), and 484–504 (MIVC…IIAI).

This sequence belongs to the complex I subunit 2 family. In terms of assembly, NDH is composed of at least 16 different subunits, 5 of which are encoded in the nucleus.

The protein resides in the plastid. The protein localises to the chloroplast thylakoid membrane. It carries out the reaction a plastoquinone + NADH + (n+1) H(+)(in) = a plastoquinol + NAD(+) + n H(+)(out). The enzyme catalyses a plastoquinone + NADPH + (n+1) H(+)(in) = a plastoquinol + NADP(+) + n H(+)(out). Functionally, NDH shuttles electrons from NAD(P)H:plastoquinone, via FMN and iron-sulfur (Fe-S) centers, to quinones in the photosynthetic chain and possibly in a chloroplast respiratory chain. The immediate electron acceptor for the enzyme in this species is believed to be plastoquinone. Couples the redox reaction to proton translocation, and thus conserves the redox energy in a proton gradient. The sequence is that of NAD(P)H-quinone oxidoreductase subunit 2 B, chloroplastic from Gossypium hirsutum (Upland cotton).